A 660-amino-acid polypeptide reads, in one-letter code: Cullin-associated NEDD8-dissociated protein 1 homolog (660 aa).

Residue Lys-16 forms a Glycyl lysine isopeptide (Lys-Gly) (interchain with G-Cter in NEDD8) linkage. The tract at residues 339–364 (TQNENDHGSDNLIDSDDGFGSDNDPE) is disordered. Residues 351–363 (IDSDDGFGSDNDP) are compositionally biased toward acidic residues.

As to quaternary structure, interacts with unneddylated cullin CDC53. Post-translationally, neddylated at Lys-16.

Assembly factor of SCF (SKP1-CUL1-F-box protein) E3 ubiquitin ligase complexes that promotes the exchange of the substrate-recognition F-box subunit in SCF complexes, thereby playing a key role in the cellular repertoire of SCF complexes. Acts as a F-box protein exchange factor. Involved in the aging process. Longevity-assurance protein. This Saccharomyces cerevisiae (strain ATCC 204508 / S288c) (Baker's yeast) protein is Cullin-associated NEDD8-dissociated protein 1 homolog (LAG2).